Here is a 107-residue protein sequence, read N- to C-terminus: Parvalbumin beta (107 aa).

N-acetylserine is present on Ser-1. EF-hand domains are found at residues 37–72 and 76–107; these read KSLD…FSPS and LTDA…MIKA. Ca(2+) is bound by residues Asp-50, Asp-52, Ser-54, Phe-56, Glu-58, Glu-61, Asp-89, Asp-91, Asp-93, Met-95, and Glu-100.

The protein belongs to the parvalbumin family.

In muscle, parvalbumin is thought to be involved in relaxation after contraction. It binds two calcium ions. This is Parvalbumin beta from Esox lucius (Northern pike).